The following is a 350-amino-acid chain: uncharacterized protein (350 aa).

Residues 171 to 334 (PTVVIAGYPN…LKERLKKIAI (164 aa)) form the OBG-type G domain. GTP is bound by residues 177 to 184 (GYPNVGKS), 219 to 223 (DTPGL), and 286 to 289 (NKID).

This sequence belongs to the TRAFAC class OBG-HflX-like GTPase superfamily. OBG GTPase family. NOG subfamily.

This is an uncharacterized protein from Methanocaldococcus jannaschii (strain ATCC 43067 / DSM 2661 / JAL-1 / JCM 10045 / NBRC 100440) (Methanococcus jannaschii).